A 189-amino-acid chain; its full sequence is Autophagy receptor ATG45 (189 aa).

The binds glycogen stretch occupies residues M1 to N96. The required for sequestration into autophagosomes stretch occupies residues E97–K189. Phosphoserine is present on S107. The ATG8 interaction motif (AIM) signature appears at Y127–L130. S172 bears the Phosphoserine mark. The interval L176–W187 is may facilitate interactions with the autophagosome membrane.

As to quaternary structure, interacts with ATG8.

It is found in the cytoplasm. The protein resides in the cytosol. Its subcellular location is the cytoplasmic vesicle. The protein localises to the autophagosome. Its function is as follows. Autophagy receptor for glycogen that facilitates the sequestration of glycogen assemblies into autophagosomes as part of bulk autophagy; the autophagy of glycogen (glycophagy) is stimulated during prolonged nitrogen starvation and during sporulation. The sequence is that of Autophagy receptor ATG45 from Saccharomyces cerevisiae (strain ATCC 204508 / S288c) (Baker's yeast).